The primary structure comprises 1545 residues: Pentafunctional AROM polypeptide (1545 aa).

The 3-dehydroquinate synthase stretch occupies residues 1–383 (MSGLIEKVSI…YEPKASYVND (383 aa)). NAD(+) is bound by residues 44 to 46 (DSN), 82 to 85 (EANK), 113 to 115 (GGV), and D118. Position 129 (R129) interacts with 7-phospho-2-dehydro-3-deoxy-D-arabino-heptonate. 138–139 (TS) provides a ligand contact to NAD(+). The 7-phospho-2-dehydro-3-deoxy-D-arabino-heptonate site is built by D145 and K151. K160 serves as a coordination point for NAD(+). N161 is a binding site for 7-phospho-2-dehydro-3-deoxy-D-arabino-heptonate. NAD(+) is bound by residues 178-181 (FLET) and N189. A Zn(2+)-binding site is contributed by E193. 7-phospho-2-dehydro-3-deoxy-D-arabino-heptonate contacts are provided by residues 193-196 (EVVK) and K249. The active-site Proton acceptor; for 3-dehydroquinate synthase activity is the E259. Residues 263–267 (RNLLN) and H270 contribute to the 7-phospho-2-dehydro-3-deoxy-D-arabino-heptonate site. Position 270 (H270) interacts with Zn(2+). H274 acts as the Proton acceptor; for 3-dehydroquinate synthase activity in catalysis. The 7-phospho-2-dehydro-3-deoxy-D-arabino-heptonate site is built by H286 and K355. Residue H286 participates in Zn(2+) binding. An EPSP synthase region spans residues 396–840 (VKDFNSAPST…WDILHTTFNV (445 aa)). Residue C822 is the For EPSP synthase activity of the active site. Positions 859–1049 (DKSIIVIGMR…IPNGRSAFVC (191 aa)) are shikimate kinase. An ATP-binding site is contributed by 866 to 873 (GMRAAGKS). The segment at 1050–1261 (LTYEDLAPVS…AAPGQLTLKE (212 aa)) is 3-dehydroquinase. The active-site Proton acceptor; for 3-dehydroquinate dehydratase activity is H1166. The active-site Schiff-base intermediate with substrate; for 3-dehydroquinate dehydratase activity is K1195. The segment at 1274–1545 (RKKFYIVGKP…GYQFSSHIDL (272 aa)) is shikimate dehydrogenase.

In the N-terminal section; belongs to the sugar phosphate cyclases superfamily. Dehydroquinate synthase family. The protein in the 2nd section; belongs to the EPSP synthase family. This sequence in the 3rd section; belongs to the shikimate kinase family. It in the 4th section; belongs to the type-I 3-dehydroquinase family. In the C-terminal section; belongs to the shikimate dehydrogenase family. Homodimer. Zn(2+) serves as cofactor.

The protein resides in the cytoplasm. The catalysed reaction is 7-phospho-2-dehydro-3-deoxy-D-arabino-heptonate = 3-dehydroquinate + phosphate. The enzyme catalyses 3-dehydroquinate = 3-dehydroshikimate + H2O. It carries out the reaction shikimate + NADP(+) = 3-dehydroshikimate + NADPH + H(+). It catalyses the reaction shikimate + ATP = 3-phosphoshikimate + ADP + H(+). The catalysed reaction is 3-phosphoshikimate + phosphoenolpyruvate = 5-O-(1-carboxyvinyl)-3-phosphoshikimate + phosphate. The protein operates within metabolic intermediate biosynthesis; chorismate biosynthesis; chorismate from D-erythrose 4-phosphate and phosphoenolpyruvate: step 2/7. It functions in the pathway metabolic intermediate biosynthesis; chorismate biosynthesis; chorismate from D-erythrose 4-phosphate and phosphoenolpyruvate: step 3/7. It participates in metabolic intermediate biosynthesis; chorismate biosynthesis; chorismate from D-erythrose 4-phosphate and phosphoenolpyruvate: step 4/7. Its pathway is metabolic intermediate biosynthesis; chorismate biosynthesis; chorismate from D-erythrose 4-phosphate and phosphoenolpyruvate: step 5/7. The protein operates within metabolic intermediate biosynthesis; chorismate biosynthesis; chorismate from D-erythrose 4-phosphate and phosphoenolpyruvate: step 6/7. In terms of biological role, the AROM polypeptide catalyzes 5 consecutive enzymatic reactions in prechorismate polyaromatic amino acid biosynthesis. The polypeptide is Pentafunctional AROM polypeptide (Komagataella phaffii (strain GS115 / ATCC 20864) (Yeast)).